Reading from the N-terminus, the 644-residue chain is Phosphomethylpyrimidine synthase (644 aa).

Residues asparagine 236, methionine 265, tyrosine 294, histidine 330, 350–352 (SRG), 391–394 (DGLR), and glutamate 430 contribute to the substrate site. Histidine 434 contacts Zn(2+). Residue tyrosine 457 coordinates substrate. Histidine 498 contributes to the Zn(2+) binding site. [4Fe-4S] cluster contacts are provided by cysteine 578, cysteine 581, and cysteine 586.

Belongs to the ThiC family. As to quaternary structure, homodimer. The cofactor is [4Fe-4S] cluster.

The enzyme catalyses 5-amino-1-(5-phospho-beta-D-ribosyl)imidazole + S-adenosyl-L-methionine = 4-amino-2-methyl-5-(phosphooxymethyl)pyrimidine + CO + 5'-deoxyadenosine + formate + L-methionine + 3 H(+). Its pathway is cofactor biosynthesis; thiamine diphosphate biosynthesis. In terms of biological role, catalyzes the synthesis of the hydroxymethylpyrimidine phosphate (HMP-P) moiety of thiamine from aminoimidazole ribotide (AIR) in a radical S-adenosyl-L-methionine (SAM)-dependent reaction. This Aliivibrio fischeri (strain ATCC 700601 / ES114) (Vibrio fischeri) protein is Phosphomethylpyrimidine synthase.